A 168-amino-acid chain; its full sequence is Shikimate kinase (168 aa).

10 to 15 is an ATP binding site; it reads GVGKTT. Mg(2+) is bound at residue Thr-14. Asp-32, Arg-56, and Gly-77 together coordinate substrate. Residue Arg-115 participates in ATP binding. Arg-133 provides a ligand contact to substrate.

It belongs to the shikimate kinase family. As to quaternary structure, monomer. The cofactor is Mg(2+).

It localises to the cytoplasm. The enzyme catalyses shikimate + ATP = 3-phosphoshikimate + ADP + H(+). It participates in metabolic intermediate biosynthesis; chorismate biosynthesis; chorismate from D-erythrose 4-phosphate and phosphoenolpyruvate: step 5/7. Its function is as follows. Catalyzes the specific phosphorylation of the 3-hydroxyl group of shikimic acid using ATP as a cosubstrate. This is Shikimate kinase from Macrococcus caseolyticus (strain JCSC5402) (Macrococcoides caseolyticum).